The following is a 122-amino-acid chain: Large ribosomal subunit protein uL18 (122 aa).

This sequence belongs to the universal ribosomal protein uL18 family. As to quaternary structure, part of the 50S ribosomal subunit; part of the 5S rRNA/L5/L18/L25 subcomplex. Contacts the 5S and 23S rRNAs.

Functionally, this is one of the proteins that bind and probably mediate the attachment of the 5S RNA into the large ribosomal subunit, where it forms part of the central protuberance. The protein is Large ribosomal subunit protein uL18 of Mycobacterium leprae (strain TN).